The following is a 1186-amino-acid chain: Pumilio homolog 1 (1186 aa).

Serine 2 carries the post-translational modification N-acetylserine. The residue at position 19 (serine 19) is a Phosphoserine. The interval 22–73 (LKHHPQEPANPNMPVVLTSGTGSQAQPQPAANQALAAGTHSSPVPGSIGVAG) is disordered. Over residues 45–58 (QAQPQPAANQALAA) the composition is skewed to low complexity. 3 positions are modified to phosphoserine: serine 75, serine 98, and serine 106. Threonine 112 carries the post-translational modification Phosphothreonine. Phosphoserine occurs at positions 124, 159, 197, 209, and 229. The segment at 233–272 (SCLRKGGFGPRDADSDENDKGEKKNKGTFDGDKLGDLKEE) is disordered. Basic and acidic residues predominate over residues 250-272 (NDKGEKKNKGTFDGDKLGDLKEE). Serine 305 is subject to Phosphoserine. A compositionally biased stretch (low complexity) spans 485–502 (TNSANQQTTPQAQQGQQQ). Disordered regions lie at residues 485–524 (TNSANQQTTPQAQQGQQQVLRGGASQRPLTPNQNQQGQQT) and 613–648 (AGTTNGPFRPLGTQQPQPQPQQQPNNNLASSSFYGN). The span at 511–524 (RPLTPNQNQQGQQT) shows a compositional bias: polar residues. Threonine 514 carries the phosphothreonine modification. Positions 626-639 (QQPQPQPQQQPNNN) are enriched in low complexity. Serine 709 and serine 714 each carry phosphoserine. Residues 742–775 (GPVGMPLPSQGPGHSQTPPPSLSSHGSSSSLNLG) are disordered. The span at 763–775 (LSSHGSSSSLNLG) shows a compositional bias: low complexity. Residue arginine 796 is modified to Omega-N-methylarginine. Residues serine 806 and serine 822 each carry the phosphoserine modification. The region spanning 828–1168 (GRSRLLEDFR…HILAKLEKYY (341 aa)) is the PUM-HD domain. Pumilio repeat units lie at residues 848–883 (EIAGHIMEFSQDQHGSRFIQLKLERATPAERQLVFN), 884–919 (EILQAAYQLMVDVFGNYVIQKFFEFGSLEQKLALAE), 920–955 (RIRGHVLSLALQMYGCRVIQKALEFIPSDQQNEMVR), 956–991 (ELDGHVLKCVKDQNGNHVVQKCIECVQPQSLQFIID), 992–1027 (AFKGQVFALSTHPYGCRVIQRILEHCLPDQTLPILE), 1028–1063 (ELHQHTEQLVQDQYGNYVIQHVLEHGRPEDKSKIVA), 1064–1099 (EIRGNVLVLSQHKFASNVVEKCVTHASRTERAVLID), and 1103–1142 (TMNDGPHSALYTMMKDQYANYVVQKMIDVAEPGQRKIVMH). An adenine-nucleotide binding in RNA target region spans residues 863 to 867 (SRFIQ). The interval 899–903 (NYVIQ) is uracil-nucleotide binding in RNA target. Residues 935 to 939 (CRVIQ) form an adenine-nucleotide binding in RNA target region. The interval 971-975 (NHVVQ) is non-specific-nucleotide binding in RNA target. The interval 1007 to 1011 (CRVIQ) is adenine-nucleotide binding in RNA target. Residues 1043–1047 (NYVIQ) form a uracil-nucleotide binding in RNA target region. Guanine-nucleotide binding in RNA target stretches follow at residues 1079–1083 (SNVVE) and 1080–1083 (NVVE). A uracil-nucleotide binding in RNA target region spans residues 1122–1126 (NYVVQ).

As to quaternary structure, recruits the CCR4-POP2-NOT deadenylase leading to translational inhibition and mRNA degradation. Interacts with TRIM71 (via NHL repeats) in an RNA-dependent manner. Post-translationally, phosphorylation at Ser-714 promotes RNA-binding activity. Following growth factor stimulation phosphorylated at Ser-714, promoting binding to the 3'-UTR of CDKN1B/p27 mRNA.

It localises to the cytoplasm. Its subcellular location is the P-body. It is found in the cytoplasmic granule. Functionally, sequence-specific RNA-binding protein that acts as a post-transcriptional repressor by binding the 3'-UTR of mRNA targets. Binds to an RNA consensus sequence, the Pumilio Response Element (PRE), 5'-UGUANAUA-3', that is related to the Nanos Response Element (NRE). Mediates post-transcriptional repression of transcripts via different mechanisms: acts via direct recruitment of the CCR4-POP2-NOT deadenylase leading to translational inhibition and mRNA degradation. Also mediates deadenylation-independent repression by promoting accessibility of miRNAs. Following growth factor stimulation, phosphorylated and binds to the 3'-UTR of CDKN1B/p27 mRNA, inducing a local conformational change that exposes miRNA-binding sites, promoting association of miR-221 and miR-222, efficient suppression of CDKN1B/p27 expression, and rapid entry to the cell cycle. Acts as a post-transcriptional repressor of E2F3 mRNAs by binding to its 3'-UTR and facilitating miRNA regulation. Represses a program of genes necessary to maintain genomic stability such as key mitotic, DNA repair and DNA replication factors. Its ability to repress those target mRNAs is regulated by the lncRNA NORAD (non-coding RNA activated by DNA damage) which, due to its high abundance and multitude of PUMILIO binding sites, is able to sequester a significant fraction of PUM1 and PUM2 in the cytoplasm. Involved in neuronal functions by regulating ATXN1 mRNA levels: acts by binding to the 3'-UTR of ATXN1 transcripts, leading to their down-regulation independently of the miRNA machinery. Plays a role in cytoplasmic sensing of viral infection. In testis, acts as a post-transcriptional regulator of spermatogenesis by binding to the 3'-UTR of mRNAs coding for regulators of p53/TP53. Involved in embryonic stem cell renewal by facilitating the exit from the ground state: acts by targeting mRNAs coding for naive pluripotency transcription factors and accelerates their down-regulation at the onset of differentiation. Binds specifically to miRNA MIR199A precursor, with PUM2, regulates miRNA MIR199A expression at a postranscriptional level. This Pongo abelii (Sumatran orangutan) protein is Pumilio homolog 1 (PUM1).